We begin with the raw amino-acid sequence, 363 residues long: DNA replication and repair protein RecF (363 aa).

Gly31–Thr38 is a binding site for ATP.

It belongs to the RecF family.

Its subcellular location is the cytoplasm. Its function is as follows. The RecF protein is involved in DNA metabolism; it is required for DNA replication and normal SOS inducibility. RecF binds preferentially to single-stranded, linear DNA. It also seems to bind ATP. The protein is DNA replication and repair protein RecF of Nitrosococcus oceani (strain ATCC 19707 / BCRC 17464 / JCM 30415 / NCIMB 11848 / C-107).